Consider the following 437-residue polypeptide: GTPase Obg (437 aa).

Positions 2–160 (SMFLDTAKIS…RQLELELKIL (159 aa)) constitute an Obg domain. The OBG-type G domain maps to 161–338 (ADVGLVGFPS…LLEATAELLA (178 aa)). GTP is bound by residues 167–174 (GFPSVGKS), 192–196 (FTTIV), 214–217 (DLPG), 284–287 (NKMD), and 319–321 (SSL). 2 residues coordinate Mg(2+): serine 174 and threonine 194. Residues 359-437 (GFAETEKNFE…IGKFEFEFVD (79 aa)) enclose the OCT domain.

It belongs to the TRAFAC class OBG-HflX-like GTPase superfamily. OBG GTPase family. Monomer. It depends on Mg(2+) as a cofactor.

The protein localises to the cytoplasm. An essential GTPase which binds GTP, GDP and possibly (p)ppGpp with moderate affinity, with high nucleotide exchange rates and a fairly low GTP hydrolysis rate. Plays a role in control of the cell cycle, stress response, ribosome biogenesis and in those bacteria that undergo differentiation, in morphogenesis control. The chain is GTPase Obg from Streptococcus pyogenes serotype M49 (strain NZ131).